We begin with the raw amino-acid sequence, 256 residues long: 3-deoxy-manno-octulosonate cytidylyltransferase (256 aa).

The protein belongs to the KdsB family.

Its subcellular location is the cytoplasm. It carries out the reaction 3-deoxy-alpha-D-manno-oct-2-ulosonate + CTP = CMP-3-deoxy-beta-D-manno-octulosonate + diphosphate. It functions in the pathway nucleotide-sugar biosynthesis; CMP-3-deoxy-D-manno-octulosonate biosynthesis; CMP-3-deoxy-D-manno-octulosonate from 3-deoxy-D-manno-octulosonate and CTP: step 1/1. It participates in bacterial outer membrane biogenesis; lipopolysaccharide biosynthesis. Its function is as follows. Activates KDO (a required 8-carbon sugar) for incorporation into bacterial lipopolysaccharide in Gram-negative bacteria. This Histophilus somni (strain 129Pt) (Haemophilus somnus) protein is 3-deoxy-manno-octulosonate cytidylyltransferase.